The chain runs to 141 residues: Hemoglobin subunit alpha-2 (141 aa).

Residues 1 to 141 form the Globin domain; sequence VLSPADKNNV…VSTVLTSKYR (141 aa). His58 is a binding site for O2. His87 provides a ligand contact to heme b.

Belongs to the globin family. As to quaternary structure, heterotetramer of two alpha chains and two beta chains. In terms of tissue distribution, red blood cells.

Involved in oxygen transport from the lung to the various peripheral tissues. This chain is Hemoglobin subunit alpha-2, found in Varecia variegata (Black-and-white ruffed lemur).